Consider the following 2096-residue polypeptide: Tudor domain-containing protein 6 (2096 aa).

Residues Ala65–Phe120 enclose the Tudor 1 domain. Positions Tyr287–Pro316 are disordered. A compositionally biased stretch (polar residues) spans Arg288–Thr302. Phosphothreonine is present on Thr293. Tudor domains are found at residues Pro310–Met369, Lys536–Leu593, His816–Val875, Pro1033–Val1088, Pro1352–Leu1411, and Cys1567–Ser1626. Phosphoserine is present on residues Ser1722 and Ser2062. Residues Ala2026–Ser2084 form the Tudor 8 domain.

As to quaternary structure, found in a mRNP complex (i.e. messenger ribonucleoproteins which correspond to mRNA with bound proteins), at least composed of TDRD1, TDRD6, TDRD7 and DDX4. Found in a complex, at least composed of PIWIL1, PIWIL2, DDX4 and TDRD6. Interacts with Tex19.1 and probably Tex19.2. Interacts with PRMT5. Interacts with SNRPB (when methylated); to trigger spliceosome formation. In terms of processing, undergoes proteolytic cleavage near the C-terminal by an unknown protease during the transition from meiosis I to meiosis II in primary spermatocytes.

It is found in the cytoplasm. Its function is as follows. Tudor domain-containing protein involved in germ cell development, more specifically the formation of chromatoid body (during spermiogenesis), Balbiani body (during oogenesis), germ plasm (upon fertilization), and for proper miRNA expression and spliceosome maturation. Essential for RNA-dependent helicase UPF1 localization to chromatoid body, for UPF1-UPF2 and UPF1-DDX4 interactions which are required for mRNA degradation, using the extended 3' UTR-triggered nonsense-mediated mRNA decay (NMD) pathway. Involved in spliceosome maturation and mRNA splicing in prophase I spermatocytes through interaction with arginine N-methyltransferase PRMT5 and symmetrically arginine dimethylated SNRPB (small nuclear ribonucleoprotein-associated protein). In Homo sapiens (Human), this protein is Tudor domain-containing protein 6.